The chain runs to 1480 residues: Cystic fibrosis transmembrane conductance regulator (1480 aa).

The Cytoplasmic segment spans residues 1–77 (MQRSPLEKAS…KLINALRRCF (77 aa)). The chain crosses the membrane as a helical span at residues 78 to 98 (FWRFMFYGIFLYLGEVTKAVQ). The ABC transmembrane type-1 1 domain occupies 81–365 (FMFYGIFLYL…WAVQTWYDSL (285 aa)). Residues 99 to 122 (PLLLGRIIASYDPDNKEERSIAIY) lie on the Extracellular side of the membrane. The helical transmembrane segment at 123–146 (LGIGLCLLFIVRTLLLHPAIFGLH) threads the bilayer. The Cytoplasmic portion of the chain corresponds to 147-195 (HIGMQMRIAMFSLIYKKTLKLSSRVLDKISIGQLVSLLSNNLNKFDEGL). Residues 196 to 216 (ALAHFVWIAPLQVALLMGLIW) form a helical membrane-spanning segment. Residues 217 to 222 (ELLQAS) are Extracellular-facing. A helical transmembrane segment spans residues 223 to 243 (AFCGLGFLIVLALFQAGLGRM). At 244–298 (MMKYRDQRAGKISERLVITSEMIENIQSVKAYCWEEAMEKMIENLRQTELKLTRK) the chain is on the cytoplasmic side. A helical transmembrane segment spans residues 299–319 (AAYVRYFNSSAFFFSGFFVVF). Residues 320–339 (LSVLPYALIKGIVLRKIFTT) are Extracellular-facing. A helical transmembrane segment spans residues 340 to 358 (ISFCIVLRMAVTRQFPWAV). Residues 359 to 858 (QTWYDSLGAI…YLRYITVHKS (500 aa)) lie on the Cytoplasmic side of the membrane. ATP-binding positions include Trp401, Ser434, 458–465 (GSTGAGKT), and Gln493. Residues 423 to 646 (NGDDSLFFSN…RPDFSSKLMG (224 aa)) form the ABC transporter 1 domain. Residue Cys524 is the site of S-palmitoyl cysteine attachment. 2 positions are modified to phosphoserine: Ser549 and Ser660. Residues 654-831 (SAERRNSILT…EEINEEDLKE (178 aa)) are disordered R region. Ser670 is subject to Phosphoserine; by PKA. A Phosphoserine modification is found at Ser686. Lys688 is covalently cross-linked (Glycyl lysine isopeptide (Lys-Gly) (interchain with G-Cter in ubiquitin)). Phosphoserine occurs at positions 700 and 712. At Thr717 the chain carries Phosphothreonine. Phosphoserine is present on residues Ser737, Ser753, Ser768, Ser790, Ser795, and Ser813. A helical transmembrane segment spans residues 859 to 879 (LIFVLIWCLVIFLAEVAASLV). The ABC transmembrane type-1 2 domain occupies 859 to 1155 (LIFVLIWCLV…AVNSSIDVDS (297 aa)). Residues 880–918 (VLWLLGNTPLQDKGNSTHSRNNSYAVIITSTSSYYVFYI) are Extracellular-facing. 2 N-linked (GlcNAc...) asparagine glycosylation sites follow: Asn894 and Asn900. A discontinuously helical membrane pass occupies residues 919–939 (YVGVADTLLAMGFFRGLPLVH). The Cytoplasmic segment spans residues 940-990 (TLITVSKILHHKMLHSVLQAPMSTLNTLKAGGILNRFSKDIAILDDLLPLT). The chain crosses the membrane as a helical span at residues 991–1011 (IFDFIQLLLIVIGAIAVVAVL). At 1012–1013 (QP) the chain is on the extracellular side. A helical membrane pass occupies residues 1014–1034 (YIFVATVPVIVAFIMLRAYFL). Residues 1035–1095 (QTSQQLKQLE…TANWFLYLST (61 aa)) are Cytoplasmic-facing. Residues 1096-1116 (LRWFQMRIEMIFVMFFIAVTF) form a helical membrane-spanning segment. At 1117-1130 (ISILTTGEGEGRIG) the chain is on the extracellular side. Residues 1131–1151 (IILTLAMNIMSTLQWAVNSSI) traverse the membrane as a helical segment. Over 1152–1480 (DVDSLMRSVS…TEEEVQDTRL (329 aa)) the chain is Cytoplasmic. Positions 1210–1443 (MTVKDLSAKY…RSLFRQAISP (234 aa)) constitute an ABC transporter 2 domain. ATP contacts are provided by residues Tyr1219 and 1244-1251 (GRTGSGKS). Residues 1386–1480 (RTLKQAFADC…TEEEVQDTRL (95 aa)) are interaction with GORASP2. Cys1395 carries S-palmitoyl cysteine lipidation. A phosphoserine mark is found at Ser1444 and Ser1456. The disordered stretch occupies residues 1451 to 1480 (PHRNSSKGKSQPQIAALKEETEEEVQDTRL). Acidic residues predominate over residues 1470–1480 (ETEEEVQDTRL). The PDZ-binding signature appears at 1478–1480 (TRL).

This sequence belongs to the ABC transporter superfamily. ABCC family. CFTR transporter (TC 3.A.1.202) subfamily. In terms of assembly, monomer; does not require oligomerization for channel activity. May form oligomers in the membrane. Interacts with SLC26A3, SLC26A6 and NHERF1. Interacts with SHANK2. Interacts with MYO6. Interacts (via C-terminus) with GOPC (via PDZ domain); this promotes CFTR internalization and thereby decreases channel activity. Interacts with SLC4A7 through NHERF1. Found in a complex with MYO5B and RAB11A. Interacts with ANO1. Interacts with SLC26A8. Interacts with AHCYL1; the interaction increases CFTR activity. Interacts with CSE1L. The core-glycosylated form interacts with GORASP2 (via PDZ GRASP-type 1 domain) in respone to ER stress. Interacts with MARCHF2; the interaction leads to CFTR ubiqtuitination and degradation. Interacts with ADGRG2. In terms of processing, N-glycosylated. Phosphorylated; cAMP treatment promotes phosphorylation and activates the channel. Dephosphorylation decreases the ATPase activity (in vitro). Phosphorylation at PKA sites activates the channel. Phosphorylation at PKC sites enhances the response to phosphorylation by PKA. Phosphorylated by AMPK; this inhibits channel activity. Post-translationally, ubiquitinated, leading to its degradation in the lysosome. Deubiquitination by USP10 in early endosomes enhances its endocytic recycling to the cell membrane. Ubiquitinated by RNF185 during ER stress. Ubiquitinated by MARCHF2.

The protein localises to the apical cell membrane. It localises to the early endosome membrane. It is found in the cell membrane. Its subcellular location is the recycling endosome membrane. The protein resides in the endoplasmic reticulum membrane. The protein localises to the nucleus. The enzyme catalyses ATP + H2O + closed Cl(-) channel = ADP + phosphate + open Cl(-) channel.. It catalyses the reaction chloride(in) = chloride(out). The catalysed reaction is hydrogencarbonate(in) = hydrogencarbonate(out). It carries out the reaction ATP + H2O = ADP + phosphate + H(+). Functionally, epithelial ion channel that plays an important role in the regulation of epithelial ion and water transport and fluid homeostasis. Mediates the transport of chloride ions across the cell membrane. Possesses an intrinsic ATPase activity and utilizes ATP to gate its channel; the passive flow of anions through the channel is gated by cycles of ATP binding and hydrolysis by the ATP-binding domains. The ion channel is also permeable to HCO(3)(-); selectivity depends on the extracellular chloride concentration. Exerts its function also by modulating the activity of other ion channels and transporters. Contributes to the regulation of the pH and the ion content of the epithelial fluid layer. Modulates the activity of the epithelial sodium channel (ENaC) complex, in part by regulating the cell surface expression of the ENaC complex. May regulate bicarbonate secretion and salvage in epithelial cells by regulating the transporter SLC4A7. Can inhibit the chloride channel activity of ANO1. Plays a role in the chloride and bicarbonate homeostasis during sperm epididymal maturation and capacitation. The sequence is that of Cystic fibrosis transmembrane conductance regulator from Nomascus leucogenys (Northern white-cheeked gibbon).